We begin with the raw amino-acid sequence, 609 residues long: tRNA uridine 5-carboxymethylaminomethyl modification enzyme MnmG (609 aa).

Residues 11 to 16, Val-123, and Thr-178 each bind FAD; that span reads GAGHAG. Residue 270-284 participates in NAD(+) binding; sequence GPRYCPSIEDKVVRF. Gln-367 provides a ligand contact to FAD.

The protein belongs to the MnmG family. In terms of assembly, homodimer. Heterotetramer of two MnmE and two MnmG subunits. Requires FAD as cofactor.

The protein localises to the cytoplasm. In terms of biological role, NAD-binding protein involved in the addition of a carboxymethylaminomethyl (cmnm) group at the wobble position (U34) of certain tRNAs, forming tRNA-cmnm(5)s(2)U34. The polypeptide is tRNA uridine 5-carboxymethylaminomethyl modification enzyme MnmG (Mycoplasmopsis synoviae (strain 53) (Mycoplasma synoviae)).